The primary structure comprises 205 residues: Imidazole glycerol phosphate synthase subunit HisH (205 aa).

Residues 3-205 (RIALLDYGMG…LLKNFVEWNI (203 aa)) form the Glutamine amidotransferase type-1 domain. The active-site Nucleophile is cysteine 80. Catalysis depends on residues histidine 185 and glutamate 187.

Heterodimer of HisH and HisF.

It localises to the cytoplasm. It carries out the reaction 5-[(5-phospho-1-deoxy-D-ribulos-1-ylimino)methylamino]-1-(5-phospho-beta-D-ribosyl)imidazole-4-carboxamide + L-glutamine = D-erythro-1-(imidazol-4-yl)glycerol 3-phosphate + 5-amino-1-(5-phospho-beta-D-ribosyl)imidazole-4-carboxamide + L-glutamate + H(+). The catalysed reaction is L-glutamine + H2O = L-glutamate + NH4(+). It participates in amino-acid biosynthesis; L-histidine biosynthesis; L-histidine from 5-phospho-alpha-D-ribose 1-diphosphate: step 5/9. In terms of biological role, IGPS catalyzes the conversion of PRFAR and glutamine to IGP, AICAR and glutamate. The HisH subunit catalyzes the hydrolysis of glutamine to glutamate and ammonia as part of the synthesis of IGP and AICAR. The resulting ammonia molecule is channeled to the active site of HisF. The chain is Imidazole glycerol phosphate synthase subunit HisH from Acinetobacter baylyi (strain ATCC 33305 / BD413 / ADP1).